A 649-amino-acid polypeptide reads, in one-letter code: 1-deoxy-D-xylulose-5-phosphate synthase 1 (649 aa).

Residues His73 and Ser113–Ala115 each bind thiamine diphosphate. Asp144 serves as a coordination point for Mg(2+). Residues Gly145 to Ala146, Asn174, Tyr285, and Glu367 each bind thiamine diphosphate. Asn174 is a Mg(2+) binding site. Residues Leu623–Ala649 are disordered.

The protein belongs to the transketolase family. DXPS subfamily. As to quaternary structure, homodimer. It depends on Mg(2+) as a cofactor. Thiamine diphosphate serves as cofactor.

The enzyme catalyses D-glyceraldehyde 3-phosphate + pyruvate + H(+) = 1-deoxy-D-xylulose 5-phosphate + CO2. The protein operates within metabolic intermediate biosynthesis; 1-deoxy-D-xylulose 5-phosphate biosynthesis; 1-deoxy-D-xylulose 5-phosphate from D-glyceraldehyde 3-phosphate and pyruvate: step 1/1. Catalyzes the acyloin condensation reaction between C atoms 2 and 3 of pyruvate and glyceraldehyde 3-phosphate to yield 1-deoxy-D-xylulose-5-phosphate (DXP). This is 1-deoxy-D-xylulose-5-phosphate synthase 1 from Kitasatospora griseola (Streptomyces griseolosporeus).